Consider the following 776-residue polypeptide: Protein translocase subunit SecA 2 (776 aa).

ATP is bound by residues Gln80, 98 to 102 (GEGKT), and Asp486.

The protein belongs to the SecA family. In terms of assembly, monomer and homodimer. Part of the essential Sec protein translocation apparatus which comprises SecA, SecYEG and auxiliary proteins SecDF. Other proteins may also be involved.

Its subcellular location is the cell membrane. It is found in the cytoplasm. The catalysed reaction is ATP + H2O + cellular proteinSide 1 = ADP + phosphate + cellular proteinSide 2.. In terms of biological role, part of the Sec protein translocase complex. Interacts with the SecYEG preprotein conducting channel. Has a central role in coupling the hydrolysis of ATP to the transfer of proteins into and across the cell membrane, serving as an ATP-driven molecular motor driving the stepwise translocation of polypeptide chains across the membrane. This chain is Protein translocase subunit SecA 2, found in Listeria monocytogenes serotype 4b (strain F2365).